We begin with the raw amino-acid sequence, 407 residues long: Argininosuccinate synthase (407 aa).

ATP contacts are provided by residues 16–24 and A44; that span reads AYSGGLDTS. L-citrulline is bound by residues Y96 and S101. G126 serves as a coordination point for ATP. L-aspartate contacts are provided by T128, N132, and D133. Residue N132 coordinates L-citrulline. The L-citrulline site is built by R136, S185, S194, E270, and Y282.

This sequence belongs to the argininosuccinate synthase family. Type 1 subfamily. Homotetramer.

The protein localises to the cytoplasm. The enzyme catalyses L-citrulline + L-aspartate + ATP = 2-(N(omega)-L-arginino)succinate + AMP + diphosphate + H(+). It participates in amino-acid biosynthesis; L-arginine biosynthesis; L-arginine from L-ornithine and carbamoyl phosphate: step 2/3. In Shewanella sediminis (strain HAW-EB3), this protein is Argininosuccinate synthase.